The primary structure comprises 156 residues: Small ribosomal subunit protein uS7 (156 aa).

Belongs to the universal ribosomal protein uS7 family. As to quaternary structure, part of the 30S ribosomal subunit. Contacts proteins S9 and S11.

In terms of biological role, one of the primary rRNA binding proteins, it binds directly to 16S rRNA where it nucleates assembly of the head domain of the 30S subunit. Is located at the subunit interface close to the decoding center, probably blocks exit of the E-site tRNA. The chain is Small ribosomal subunit protein uS7 from Clostridium beijerinckii (strain ATCC 51743 / NCIMB 8052) (Clostridium acetobutylicum).